The sequence spans 379 residues: Ascochitine biosynthesis cluster protein 8 (379 aa).

3 helical membrane-spanning segments follow: residues 87-107, 116-136, and 141-161; these read ELIA…LDLE, VGPV…VAAC, and IKVF…VVAL.

The protein localises to the membrane. The protein operates within mycotoxin biosynthesis. In terms of biological role, part of the gene cluster that mediates the biosynthesis of the selective antifungal agent ascochitine, an o-quinone methide that plays a possible protective role against other microbial competitors in nature and is considered to be important for pathogenicity of legume-associated Didymella species. The pathway probably begins with the synthesis of a keto-aldehyde intermediate by the ascochitine non-reducing polyketide synthase pksAC from successive condensations of 4 malonyl-CoA units, presumably with a simple acetyl-CoA starter unit. Release of the keto-aldehyde intermediate is consistent with the presence of the C-terminal reductive release domain. The HR-PKS (orf7) probably makes a diketide starter unit which is passed to the non-reducing polyketide synthase pksAC for further extension, producing ascochital and ascochitine. The aldehyde dehydrogenase (orf1), the 2-oxoglutarate-dependent dioxygenase (orf3) and the dehydrogenase (orf9) are probably involved in subsequent oxidations of methyl groups to the carboxylic acid of the heterocyclic ring. The ascochitine gene cluster also includes a gene encoding a short peptide with a cupin domain (orf2) that is often found in secondary metabolite gene clusters and which function has still to be determined. The sequence is that of Ascochitine biosynthesis cluster protein 8 from Didymella fabae (Leaf and pod spot disease fungus).